The following is a 766-amino-acid chain: FYVE, RhoGEF and PH domain-containing protein 4 (766 aa).

The tract at residues 1 to 150 is actin filament-binding; that stretch reads MEESNPAPTS…SSVTNSHDEN (150 aa). Polar residues-rich tracts occupy residues 43–65, 132–145, and 152–161; these read STMNLNIPQTPRQHGLTSTTPQK, RNETTTDSASSVTN, and CDSSCRTQGT. The tract at residues 43 to 167 is disordered; it reads STMNLNIPQT…TQGTDLGLPS (125 aa). The region spanning 206 to 393 is the DH domain; the sequence is KLHKIATELL…STAASHSNSA (188 aa). A PH 1 domain is found at 422 to 521; the sequence is ELIKEGQILK…WIKALQESID (100 aa). The FYVE-type zinc-finger motif lies at 559-619; sequence DNEVTMCMKC…VCKDCYQIMS (61 aa). Residues Cys-565, Cys-568, Cys-582, Cys-585, Cys-590, Cys-593, Cys-611, and Cys-614 each contribute to the Zn(2+) site. Residues 643–740 enclose the PH 2 domain; that stretch reads NSEVCSFLQY…WLKIILLAVT (98 aa). Phosphoserine occurs at positions 702 and 716. The tract at residues 745 to 766 is disordered; it reads DGPSEHLDTLDNLPGPKEKSEC.

In terms of assembly, homooligomer. As to expression, detected in brain, lung, liver, skeletal muscle, kidney, testis and cultured hippocampal neurons.

Its subcellular location is the cytoplasm. It localises to the cytoskeleton. It is found in the cell projection. The protein resides in the filopodium. In terms of biological role, activates CDC42, a member of the Ras-like family of Rho- and Rac proteins, by exchanging bound GDP for free GTP. Plays a role in regulating the actin cytoskeleton and cell shape. Activates MAPK8. In Rattus norvegicus (Rat), this protein is FYVE, RhoGEF and PH domain-containing protein 4 (Fgd4).